The sequence spans 409 residues: Adenosine receptor A2a (409 aa).

Topologically, residues Met-1–Ser-4 are extracellular. Residues Val-5–Trp-29 form a helical membrane-spanning segment. At Ile-30–Asn-39 the chain is on the cytoplasmic side. The helical transmembrane segment at Tyr-40 to Ile-63 threads the bilayer. Over Ser-64–Cys-74 the chain is Extracellular. Intrachain disulfides connect Cys-68–Cys-156, Cys-71–Cys-143, and Cys-74–Cys-163. Residues Leu-75–Ile-97 form a helical membrane-spanning segment. Over Asp-98 to Arg-117 the chain is Cytoplasmic. Residues Ala-118–Trp-140 traverse the membrane as a helical segment. Residues Asn-141–Pro-170 lie on the Extracellular side of the membrane. N-linked (GlcNAc...) asparagine glycans are attached at residues Asn-142 and Asn-151. Glu-166 lines the adenosine pocket. Residues Met-171–Leu-195 form a helical membrane-spanning segment. Topologically, residues Arg-196–Ser-231 are cytoplasmic. The helical transmembrane segment at Leu-232–Phe-255 threads the bilayer. Residue Asn-250 participates in adenosine binding. Residues Cys-256 and Cys-259 are joined by a disulfide bond. Residues Cys-256 to Pro-263 are Extracellular-facing. Residues Pro-264–Tyr-287 traverse the membrane as a helical segment. Positions 274 and 275 each coordinate adenosine. Topologically, residues Arg-288–Ser-409 are cytoplasmic. Disordered regions lie at residues Thr-316–Asn-336 and Gln-369–Ser-409.

The protein belongs to the G-protein coupled receptor 1 family. As to quaternary structure, interacts (via cytoplasmic C-terminal domain) with USP4; the interaction is direct. May interact with DRD4. Interacts with NECAB2. Interacts (via cytoplasmic C-terminal domain) with GAS2L2; interaction enhances receptor-mediated adenylyl cyclase activity. In terms of processing, ubiquitinated. Deubiquitinated by USP4; leading to stabilization and expression at the cell surface.

It localises to the cell membrane. Its function is as follows. Receptor for adenosine. The activity of this receptor is mediated by G proteins which activate adenylyl cyclase. This is Adenosine receptor A2a (ADORA2A) from Cavia porcellus (Guinea pig).